Consider the following 66-residue polypeptide: Large ribosomal subunit protein bL35 (66 aa).

The segment at 1–22 is disordered; sequence MAYKLKSHRGAAKRFKKTASGG.

The protein belongs to the bacterial ribosomal protein bL35 family.

This chain is Large ribosomal subunit protein bL35, found in Pseudoalteromonas translucida (strain TAC 125).